Reading from the N-terminus, the 158-residue chain is uncharacterized protein (158 aa).

This is an uncharacterized protein from Mycoplasma pneumoniae (strain ATCC 29342 / M129 / Subtype 1) (Mycoplasmoides pneumoniae).